The primary structure comprises 835 residues: Disease resistance protein RPP13 (835 aa).

A coiled-coil region spans residues 25-41 (MAVKEDLEELKTELTCI). The NB-ARC domain occupies 144 to 453 (SSLRVRQLRR…AEGFIQGDEE (310 aa)). 192–199 (GMGGLGKT) provides a ligand contact to ATP.

This sequence belongs to the disease resistance NB-LRR family. RPP13 subfamily.

Disease resistance protein. Resistance proteins guard the plant against pathogens that contain an appropriate avirulence protein via an indirect interaction with this avirulence protein. That triggers a defense system including the hypersensitive response, which restricts the pathogen growth. In contrast to other resistance proteins, it works independently of ESD1 and NSD1 proteins and does not require the accumulation of salicylic acid, suggesting the existence of an independent signaling pathway. The specificity to avirulence proteins differs in the different cultivars. In Arabidopsis thaliana (Mouse-ear cress), this protein is Disease resistance protein RPP13 (RPP13).